We begin with the raw amino-acid sequence, 79 residues long: Sulfur carrier protein TusA (79 aa).

Cys-16 acts as the Cysteine persulfide intermediate in catalysis.

This sequence belongs to the sulfur carrier protein TusA family.

The protein resides in the cytoplasm. Its function is as follows. Sulfur carrier protein which probably makes part of a sulfur-relay system. This Pseudomonas aeruginosa (strain LESB58) protein is Sulfur carrier protein TusA.